The primary structure comprises 1159 residues: Ferroxidase HEPHL1 (1159 aa).

Residues Met1–Thr24 form the signal peptide. 6 consecutive Plastocyanin-like domains span residues Val25–Cys207, Thr218–Cys366, Gln379–Cys561, Thr571–Cys719, Met731–Cys907, and Lys915–Asn1092. The Extracellular segment spans residues Val25–Ala1114. Residues His127 and His129 each contribute to the Cu cation site. The N-linked (GlcNAc...) asparagine glycan is linked to Asn161. Cys181 and Cys207 are oxidised to a cystine. Cu cation-binding residues include His187 and His189. Asn236 carries an N-linked (GlcNAc...) asparagine glycan. A disulfide bridge connects residues Cys285 and Cys366. Cu cation is bound by residues His304, Cys347, and His352. Asn407 is a glycosylation site (N-linked (GlcNAc...) asparagine). A disulfide bridge links Cys535 with Cys561. An N-linked (GlcNAc...) asparagine glycan is attached at Asn589. A disulfide bridge links Cys638 with Cys719. 4 residues coordinate Cu cation: His657, Cys700, His705, and Met710. Asn772 carries N-linked (GlcNAc...) asparagine glycosylation. An intrachain disulfide couples Cys881 to Cys907. Asn935 carries N-linked (GlcNAc...) asparagine glycosylation. Cu cation is bound by residues His1003, His1006, His1008, His1048, Cys1049, His1050, His1054, and Met1059. Residues Ala1115–Leu1135 form a helical membrane-spanning segment. At Arg1136–Leu1159 the chain is on the cytoplasmic side.

Belongs to the multicopper oxidase family. It depends on Cu cation as a cofactor.

It is found in the membrane. It catalyses the reaction 4 Fe(2+) + O2 + 4 H(+) = 4 Fe(3+) + 2 H2O. Its function is as follows. Is a copper-binding glycoprotein with ferroxidase activity. It oxidizes Fe(2+) to Fe(3+) without releasing radical oxygen species. May be involved in the regulation of intracellular iron content. This chain is Ferroxidase HEPHL1 (HEPHL1), found in Homo sapiens (Human).